Consider the following 462-residue polypeptide: WD repeat-containing protein WRAP73 (462 aa).

WD repeat units follow at residues 46 to 86 (TCLD…WHCK), 89 to 129 (EGSA…VSYI), 176 to 210 (TDTQ…YSLD), and 221 to 260 (EWSL…MITE). Residue S281 is modified to Phosphoserine. WD repeat units follow at residues 328–369 (NPRM…LFVV) and 371–410 (EHMS…SVQV).

In terms of assembly, interacts with SSX2IP. In terms of tissue distribution, ubiquitous.

It is found in the cytoplasm. The protein localises to the cytoskeleton. Its subcellular location is the microtubule organizing center. It localises to the centrosome. The SSX2IP:WRAP73 complex is proposed to act as regulator of spindle anchoring at the mitotic centrosome. Required for the centrosomal localization of SSX2IP and normal mitotic bipolar spindle morphology. Required for the targeting of centriole satellite proteins to centrosomes such as of PCM1, SSX2IP, CEP290 and PIBF1/CEP90. Required for ciliogenesis and involved in the removal of the CEP97:CCP110 complex from the mother centriole. Involved in ciliary vesicle formation at the mother centriole and required for the docking of vesicles to the basal body during ciliogenesis; may promote docking of RAB8A- and ARL13B-containing vesicles. This chain is WD repeat-containing protein WRAP73 (Wrap73), found in Mus musculus (Mouse).